The following is a 921-amino-acid chain: Protein translocase subunit SecA (921 aa).

Residues Q87, 105 to 109 (GEGKT), and D515 each bind ATP. A disordered region spans residues 872 to 901 (DMEVAGSTGDRGAALDIQPAPVRSGPKIGR). Residues C905, C907, C916, and C917 each contribute to the Zn(2+) site.

This sequence belongs to the SecA family. Monomer and homodimer. Part of the essential Sec protein translocation apparatus which comprises SecA, SecYEG and auxiliary proteins SecDF-YajC and YidC. The cofactor is Zn(2+).

It localises to the cell inner membrane. The protein resides in the cytoplasm. The catalysed reaction is ATP + H2O + cellular proteinSide 1 = ADP + phosphate + cellular proteinSide 2.. Its function is as follows. Part of the Sec protein translocase complex. Interacts with the SecYEG preprotein conducting channel. Has a central role in coupling the hydrolysis of ATP to the transfer of proteins into and across the cell membrane, serving both as a receptor for the preprotein-SecB complex and as an ATP-driven molecular motor driving the stepwise translocation of polypeptide chains across the membrane. In Polynucleobacter asymbioticus (strain DSM 18221 / CIP 109841 / QLW-P1DMWA-1) (Polynucleobacter necessarius subsp. asymbioticus), this protein is Protein translocase subunit SecA.